An 872-amino-acid polypeptide reads, in one-letter code: G-type lectin S-receptor-like serine/threonine-protein kinase At5g24080 (872 aa).

The first 25 residues, 1–25 (MSSFHFYFPSVGLFSFFCFFLVSLA), serve as a signal peptide directing secretion. The Extracellular portion of the chain corresponds to 26–472 (TEPHIGLGSK…SRKSHGLRQK (447 aa)). The 120-residue stretch at 30-149 (IGLGSKLKAS…EVTAGPTIWQ (120 aa)) folds into the Bulb-type lectin domain. 6 N-linked (GlcNAc...) asparagine glycosylation sites follow: Asn-49, Asn-117, Asn-208, Asn-219, Asn-261, and Asn-294. The EGF-like; atypical domain occupies 306–344 (VSNPCDIAGICGNGVCNLDRTKKNADCLCLPGSVKLPDQ). 2 cysteine pairs are disulfide-bonded: Cys-310-Cys-321 and Cys-316-Cys-332. N-linked (GlcNAc...) asparagine glycosylation is found at Asn-353, Asn-367, and Asn-390. One can recognise a PAN domain in the interval 360-447 (CESNINRNGS…PGSTLFVKTR (88 aa)). 2 disulfides stabilise this stretch: Cys-400/Cys-424 and Cys-404/Cys-410. N-linked (GlcNAc...) asparagine glycosylation is found at Asn-449 and Asn-459. The chain crosses the membrane as a helical span at residues 473-493 (VLVIPIVVGMLVLVALLGMLL). Residues 494 to 872 (YYNLDRKRTL…TCSYSSMSPR (379 aa)) are Cytoplasmic-facing. Thr-521 carries the post-translational modification Phosphothreonine. A Protein kinase domain is found at 530-810 (NNFSQLLGSG…LEGTSDEINL (281 aa)). Residues 536–544 (LGSGGFGTV) and Lys-558 contribute to the ATP site. Tyr-603 carries the post-translational modification Phosphotyrosine. Positions 619–637 (EQTANLLDWRTRFEIAVAT) are caM-binding. Residue Asp-656 is the Proton acceptor of the active site. Thr-690 and Thr-695 each carry phosphothreonine.

This sequence belongs to the protein kinase superfamily. Ser/Thr protein kinase family.

Its subcellular location is the cell membrane. The enzyme catalyses L-seryl-[protein] + ATP = O-phospho-L-seryl-[protein] + ADP + H(+). It carries out the reaction L-threonyl-[protein] + ATP = O-phospho-L-threonyl-[protein] + ADP + H(+). This chain is G-type lectin S-receptor-like serine/threonine-protein kinase At5g24080, found in Arabidopsis thaliana (Mouse-ear cress).